Here is a 447-residue protein sequence, read N- to C-terminus: SNF1-related protein kinase regulatory subunit gamma-1-like (447 aa).

Residue alanine 2 is modified to N-acetylalanine. Position 35 is a phosphoserine (serine 35). CBS domains follow at residues 54–120 (QVPG…SAEL), 214–275 (SFRW…GRDW), 292–350 (MSPN…PEVF), and 374–433 (LAIP…PNYF).

The protein belongs to the 5'-AMP-activated protein kinase gamma subunit family. As to quaternary structure, subunit of a probable heterotrimeric complex consisting of an alpha catalytic (KIN10 or KIN11) subunit, and a beta (KINB) and a gamma (KING or SNF4) non-catalytic regulatory subunits.

Regulatory subunit of the probable trimeric SNF1-related protein kinase (SnRK) complex, which may play a role in a signal transduction cascade regulating gene expression and carbohydrate metabolism in higher plants. The chain is SNF1-related protein kinase regulatory subunit gamma-1-like (CBSCBS2) from Arabidopsis thaliana (Mouse-ear cress).